The sequence spans 791 residues: Solute carrier family 26 member 9 (791 aa).

Residues 1–70 (MSQPRPRYVV…WLPKYKIKDY (70 aa)) are Cytoplasmic-facing. Residues 71 to 96 (IIPDLLGGLSGGSIQVPQGMAFALLA) form a helical membrane-spanning segment. The Extracellular segment spans residues 97 to 99 (NLP). Residues 100-117 (AVNGLYSSFFPLLTYFFL) form a helical membrane-spanning segment. At 118–128 (GGVHQMVPGTF) the chain is on the cytoplasmic side. The chain crosses the membrane as a helical span at residues 129–142 (AVISILVGNICLQL). The Extracellular portion of the chain corresponds to 143–171 (APESKFQVFNNATNESYVDTAAMEAERLH). The helical transmembrane segment at 172–190 (VSATLACLTAIIQMGLGFM) threads the bilayer. The Cytoplasmic segment spans residues 191–202 (QFGFVAIYLSES). The helical transmembrane segment at 203 to 224 (FIRGFMTAAGLQILISVLKYIF) threads the bilayer. The Extracellular segment spans residues 225–235 (GLTIPSYTGPG). The segment at residues 236–244 (SIVFTFIDI) is an intramembrane region (helical). At 245 to 254 (CKNLPHTNIA) the chain is on the extracellular side. The chain crosses the membrane as a helical span at residues 255–273 (SLIFALISGAFLVLVKELN). Over 274–281 (ARYMHKIR) the chain is Cytoplasmic. A helical transmembrane segment spans residues 282–297 (FPIPTEMIVVVVATAI). The Extracellular portion of the chain corresponds to 298–327 (SGGCKMPKKYHMQIVGEIQRGFPTPVSPVV). A helical transmembrane segment spans residues 328–348 (SQWKDMIGTAFSLAIVSYVIN). Topologically, residues 349-366 (LAMGRTLANKHGYDVDSN) are cytoplasmic. The helical transmembrane segment at 367-382 (QEMIALGCSNFFGSFF) threads the bilayer. At 383–390 (KIHVICCA) the chain is on the extracellular side. The helical transmembrane segment at 391 to 400 (LSVTLAVDGA) threads the bilayer. At 401–404 (GGKS) the chain is on the cytoplasmic side. Residues 405 to 423 (QVASLCVSLVVMITMLVLG) form a helical membrane-spanning segment. Residues 424-428 (IYLYP) lie on the Extracellular side of the membrane. The helical transmembrane segment at 429–450 (LPKSVLGALIAVNLKNSLKQLT) threads the bilayer. Topologically, residues 451–464 (DPYYLWRKSKLDCC) are cytoplasmic. Residues 465–476 (IWVVSFLSSFFL) form a helical membrane-spanning segment. A topological domain (extracellular) is located at residue Ser-477. A helical transmembrane segment spans residues 478-489 (LPYGVAVGVAFS). Over 490-791 (VLVVVFQTQF…MFHAETLTAL (302 aa)) the chain is Cytoplasmic. The STAS domain occupies 519-737 (TYNRAQDIQG…PSIHDAVLFA (219 aa)). A disordered region spans residues 602–650 (FENAPPTDPNNNQTPANGTSVSYITFSPDSSSPAQSEPPASAEAPGEPS). Positions 610 to 626 (PNNNQTPANGTSVSYIT) are enriched in polar residues. A compositionally biased stretch (low complexity) spans 628-650 (SPDSSSPAQSEPPASAEAPGEPS).

Belongs to the SLC26A/SulP transporter (TC 2.A.53) family. As to quaternary structure, homodimer. As to expression, predominantly expressed in lung at the luminal side of the bronchiolar and alveolar epithelium of lung. To a lower extent, also expressed in pancreas and prostate.

It is found in the cell membrane. The protein resides in the endomembrane system. The catalysed reaction is chloride(in) = chloride(out). It carries out the reaction hydrogencarbonate(in) + chloride(out) = hydrogencarbonate(out) + chloride(in). Inhibited by ammonium and thiosulfate. Ion transporter that can act both as an ion channel and anion exchanger. Mainly acts as a chloride channel, which mediate uncoupled chloride anion transport in an alternate-access mechanism where a saturable binding site is alternately exposed to either one or the other side of the membrane. Also acts as a DIDS- and thiosulfate- sensitive anion exchanger the exchange of chloride for bicarbonate ions across the cell membrane. The sequence is that of Solute carrier family 26 member 9 from Homo sapiens (Human).